A 96-amino-acid polypeptide reads, in one-letter code: Small ribosomal subunit protein bS6 (96 aa).

It belongs to the bacterial ribosomal protein bS6 family.

Its function is as follows. Binds together with bS18 to 16S ribosomal RNA. This is Small ribosomal subunit protein bS6 from Heliobacterium modesticaldum (strain ATCC 51547 / Ice1).